A 235-amino-acid chain; its full sequence is 7-carboxy-7-deazaguanine synthase (235 aa).

Residues 25–27 and arginine 40 contribute to the substrate site; that span reads IQG. A Radical SAM core domain is found at 31-235; it reads FTGTYSVFVR…PRLHLLVQLP (205 aa). Residues cysteine 44, cysteine 48, and cysteine 51 each contribute to the [4Fe-4S] cluster site. Threonine 53 serves as a coordination point for Mg(2+). Threonine 85 contributes to the substrate binding site. S-adenosyl-L-methionine-binding positions include glycine 87 and 135–137; that span reads SPK. Proline 235 serves as a coordination point for substrate.

It belongs to the radical SAM superfamily. 7-carboxy-7-deazaguanine synthase family. In terms of assembly, homodimer. It depends on [4Fe-4S] cluster as a cofactor. S-adenosyl-L-methionine is required as a cofactor. The cofactor is Mg(2+).

The catalysed reaction is 6-carboxy-5,6,7,8-tetrahydropterin + H(+) = 7-carboxy-7-deazaguanine + NH4(+). Its pathway is purine metabolism; 7-cyano-7-deazaguanine biosynthesis. Catalyzes the complex heterocyclic radical-mediated conversion of 6-carboxy-5,6,7,8-tetrahydropterin (CPH4) to 7-carboxy-7-deazaguanine (CDG), a step common to the biosynthetic pathways of all 7-deazapurine-containing compounds. The polypeptide is 7-carboxy-7-deazaguanine synthase (Hyperthermus butylicus (strain DSM 5456 / JCM 9403 / PLM1-5)).